We begin with the raw amino-acid sequence, 307 residues long: Glycine--tRNA ligase alpha subunit (307 aa).

It belongs to the class-II aminoacyl-tRNA synthetase family. As to quaternary structure, tetramer of two alpha and two beta subunits.

Its subcellular location is the cytoplasm. The enzyme catalyses tRNA(Gly) + glycine + ATP = glycyl-tRNA(Gly) + AMP + diphosphate. The polypeptide is Glycine--tRNA ligase alpha subunit (glyQ) (Xylella fastidiosa (strain 9a5c)).